A 24-amino-acid chain; its full sequence is Tryptophanase operon leader peptide (24 aa).

This is Tryptophanase operon leader peptide (tnaL) from Escherichia coli O157:H7.